The sequence spans 245 residues: Orotidine 5'-phosphate decarboxylase (245 aa).

Substrate is bound by residues D22, K44, 71–80 (DLKFHDIPNT), T131, R192, Q201, G221, and R222. K73 serves as the catalytic Proton donor.

This sequence belongs to the OMP decarboxylase family. Type 1 subfamily. In terms of assembly, homodimer.

The catalysed reaction is orotidine 5'-phosphate + H(+) = UMP + CO2. It functions in the pathway pyrimidine metabolism; UMP biosynthesis via de novo pathway; UMP from orotate: step 2/2. Its function is as follows. Catalyzes the decarboxylation of orotidine 5'-monophosphate (OMP) to uridine 5'-monophosphate (UMP). The chain is Orotidine 5'-phosphate decarboxylase from Shigella flexneri serotype 5b (strain 8401).